Reading from the N-terminus, the 335-residue chain is Legumin type B (335 aa).

Disordered stretches follow at residues 47–87 (PETQ…GNSV) and 102–155 (TEED…GRNG). Over residues 105 to 118 (DTAKRLRSPRDKRN) the composition is skewed to basic and acidic residues. Residues 135 to 144 (QQEEEEEEEE) are compositionally biased toward acidic residues. The Cupin type-1 domain occupies 167–314 (ENIAQPARAD…AFGLRQRQVT (148 aa)).

The protein belongs to the 11S seed storage protein (globulins) family. In terms of assembly, hexamer; each subunit is composed of an acidic and a basic chain derived from a single precursor and linked by a disulfide bond.

In terms of biological role, this protein found in the seeds of many leguminous and non-leguminous plants is the source of sulfur-containing amino acids in seed meals. This Vicia faba (Broad bean) protein is Legumin type B (LEB2).